The following is a 388-amino-acid chain: tRNA (guanine(26)-N(2))-dimethyltransferase (388 aa).

Residues 4-383 (RTIVEGTTKI…APIAEIKKII (380 aa)) enclose the Trm1 methyltransferase domain. S-adenosyl-L-methionine contacts are provided by Arg41, Arg78, Asp94, and Ala123. Cys251, Cys254, Cys271, and Cys274 together coordinate Zn(2+).

It belongs to the class I-like SAM-binding methyltransferase superfamily. Trm1 family.

The catalysed reaction is guanosine(26) in tRNA + 2 S-adenosyl-L-methionine = N(2)-dimethylguanosine(26) in tRNA + 2 S-adenosyl-L-homocysteine + 2 H(+). Functionally, dimethylates a single guanine residue at position 26 of a number of tRNAs using S-adenosyl-L-methionine as donor of the methyl groups. This Methanosarcina mazei (strain ATCC BAA-159 / DSM 3647 / Goe1 / Go1 / JCM 11833 / OCM 88) (Methanosarcina frisia) protein is tRNA (guanine(26)-N(2))-dimethyltransferase.